Here is a 346-residue protein sequence, read N- to C-terminus: Very-long-chain 3-oxoacyl-CoA reductase (346 aa).

Residues 26-46 (TASVLLVAGGWFVVSRVWTFL) traverse the membrane as a helical segment. 8 residues coordinate NADP(+): I71, D126, D134, N153, Y220, K224, I253, and S255. Residue Y220 is the Proton donor of the active site. The active-site Lowers pKa of active site Tyr is K224.

Belongs to the short-chain dehydrogenases/reductases (SDR) family.

It localises to the endoplasmic reticulum membrane. It carries out the reaction a very-long-chain (3R)-3-hydroxyacyl-CoA + NADP(+) = a very-long-chain 3-oxoacyl-CoA + NADPH + H(+). Its pathway is lipid metabolism; fatty acid biosynthesis. Component of the microsomal membrane bound fatty acid elongation system, which produces the 26-carbon very long-chain fatty acids (VLCFA) from palmitate. Catalyzes the reduction of the 3-ketoacyl-CoA intermediate that is formed in each cycle of fatty acid elongation. VLCFAs serve as precursors for ceramide and sphingolipids. This is Very-long-chain 3-oxoacyl-CoA reductase from Emericella nidulans (strain FGSC A4 / ATCC 38163 / CBS 112.46 / NRRL 194 / M139) (Aspergillus nidulans).